Reading from the N-terminus, the 246-residue chain is Ribonuclease 3 (246 aa).

The RNase III domain occupies 16–146 (ATELEAGIGY…LLAAVYLDGG (131 aa)). A Mg(2+)-binding site is contributed by glutamate 59. Aspartate 63 is an active-site residue. Mg(2+)-binding residues include asparagine 132 and glutamate 135. Glutamate 135 is a catalytic residue. Residues 173–242 (DFKTEFQEMV…ARQVLARFAA (70 aa)) enclose the DRBM domain.

It belongs to the ribonuclease III family. In terms of assembly, homodimer. The cofactor is Mg(2+).

The protein localises to the cytoplasm. It catalyses the reaction Endonucleolytic cleavage to 5'-phosphomonoester.. Digests double-stranded RNA. Involved in the processing of primary rRNA transcript to yield the immediate precursors to the large and small rRNAs (23S and 16S). Processes some mRNAs, and tRNAs when they are encoded in the rRNA operon. Processes pre-crRNA and tracrRNA of type II CRISPR loci if present in the organism. The chain is Ribonuclease 3 from Geobacter metallireducens (strain ATCC 53774 / DSM 7210 / GS-15).